Reading from the N-terminus, the 542-residue chain is Chaperonin GroEL 2 (542 aa).

Residues 30–33 (TLGP), Lys51, 87–91 (DGTTT), Gly415, and Asp496 each bind ATP. The segment at 523–542 (AEKPKKDGQPQMPPAPGMDF) is disordered. Residues 533-542 (QMPPAPGMDF) show a composition bias toward pro residues.

It belongs to the chaperonin (HSP60) family. In terms of assembly, forms a cylinder of 14 subunits composed of two heptameric rings stacked back-to-back. Interacts with the co-chaperonin GroES.

It is found in the cytoplasm. The catalysed reaction is ATP + H2O + a folded polypeptide = ADP + phosphate + an unfolded polypeptide.. Its function is as follows. Together with its co-chaperonin GroES, plays an essential role in assisting protein folding. The GroEL-GroES system forms a nano-cage that allows encapsulation of the non-native substrate proteins and provides a physical environment optimized to promote and accelerate protein folding. The polypeptide is Chaperonin GroEL 2 (Sinorhizobium medicae (strain WSM419) (Ensifer medicae)).